A 700-amino-acid chain; its full sequence is MAKRIFSVSFLLVLLNVLHICIKFSVADLPTHVETKNLLGKWKILRTKTSPNLTTCGSSQPNKNTYNVGITDYKKYLLENNYEFVSELNVILSDDYVLYGDIYNTQDNEHRSKWKVLAVYDENKRVIGTWTTICDEGFEIKIGNETYAALMHYEPNGKCGPVSDEDSLDSNGDTDCYTTSFSKIRYGWLDVENEKNEHLHGCFYAERIFDNVNEIKHLDSFTIDKDSQNVLQTFTYDTKLNNILNSNNMLYKFGNLQKPTFTKRNNTNVQFNSELNWHRMKHHGKKKPLKKSMLDASRQTYACPCNANEVVDNVINKGDSDNPVSPTLIQLNNNLKNTTQTGNKDTNEMDLENYEDTLNSPKRELEINELPKNFTWGDPWNKNTREYEVTNQLLCGSCYIASQLYAFKRRIEVALTKKLDRKYLNNFDDQLSIQTVLSCSFYDQGCNGGFPYLVSKLAKLQGIPLNVYFPYSATEETCPYNISKHPNDMNGSAKLREINAIFNSNNNMSTYNNINNDHHQLGVYANTASSQEQHGISEENRWYAKDFNYVGGCYGCNQCNGEKIMMNEIYRNGPIVSSFEASPDFYDYADGVYFVEDFPHARRCTIEPKNDGVYNITGWDRVNHAIVLLGWGEEEINGKLYKYWIGRNSWGNGWGKEGYFKILRGQNFSGIESQSLFIEPDFSRGAGKILLEKMQKELGN.

The N-terminal stretch at 1 to 27 is a signal peptide; that stretch reads MAKRIFSVSFLLVLLNVLHICIKFSVA. N-linked (GlcNAc...) asparagine glycosylation is found at Asn-52, Asn-144, Asn-265, Asn-337, and Asn-373. Positions 210-369 are excised as a propeptide; it reads DNVNEIKHLD…SPKRELEINE (160 aa). Intrachain disulfides connect Cys-395/Cys-446 and Cys-439/Cys-478. Cys-398 is an active-site residue. Thr-416 carries the sulfothreonine modification. Residues Phe-450 and Tyr-452 each contribute to the chloride site. N-linked (GlcNAc...) asparagine glycosylation is found at Asn-481, Asn-490, and Asn-507. Tyr-549 lines the chloride pocket. Asn-615 carries an N-linked (GlcNAc...) asparagine glycan. Catalysis depends on residues His-624 and Asn-648. The N-linked (GlcNAc...) asparagine glycan is linked to Asn-667.

This sequence belongs to the peptidase C1 family. As to quaternary structure, monomer. It depends on chloride as a cofactor.

It localises to the vacuole lumen. It is found in the parasitophorous vacuole lumen. It carries out the reaction Release of an N-terminal dipeptide, Xaa-Yaa-|-Zaa-, except when Xaa is Arg or Lys, or Yaa or Zaa is Pro.. Its function is as follows. Thiol protease that cleaves dipeptides from the N-terminus of protein substrates. Active against a broad range of dipeptide substrates composed of both polar and hydrophobic amino acids. Proline cannot occupy the P1 position and arginine or lysine cannot occupy the P2 position of the substrate. Involved in host hemoglobin degradation by generating dipeptides from hemoglobin-derived oligopeptides. This chain is Dipeptidyl aminopeptidase 1, found in Plasmodium falciparum (isolate 3D7).